The primary structure comprises 396 residues: Elongation factor Tu (396 aa).

Positions 10–206 (KPHCNIGTIG…EVDAYIPQPE (197 aa)) constitute a tr-type G domain. The G1 stretch occupies residues 19–26 (GHVDHGKT). 19–26 (GHVDHGKT) is a binding site for GTP. Thr26 is a Mg(2+) binding site. Positions 60–64 (GITIS) are G2. The segment at 81 to 84 (DCPG) is G3. GTP is bound by residues 81–85 (DCPGH) and 136–139 (NKCD). The interval 136-139 (NKCD) is G4. A G5 region spans residues 174–176 (SAL).

The protein belongs to the TRAFAC class translation factor GTPase superfamily. Classic translation factor GTPase family. EF-Tu/EF-1A subfamily. In terms of assembly, monomer.

Its subcellular location is the cytoplasm. It carries out the reaction GTP + H2O = GDP + phosphate + H(+). In terms of biological role, GTP hydrolase that promotes the GTP-dependent binding of aminoacyl-tRNA to the A-site of ribosomes during protein biosynthesis. The chain is Elongation factor Tu from Paramagnetospirillum magneticum (strain ATCC 700264 / AMB-1) (Magnetospirillum magneticum).